A 315-amino-acid polypeptide reads, in one-letter code: ATP synthase gamma chain (315 aa).

This sequence belongs to the ATPase gamma chain family. In terms of assembly, F-type ATPases have 2 components, CF(1) - the catalytic core - and CF(0) - the membrane proton channel. CF(1) has five subunits: alpha(3), beta(3), gamma(1), delta(1), epsilon(1). CF(0) has three main subunits: a, b and c.

The protein localises to the cellular thylakoid membrane. Functionally, produces ATP from ADP in the presence of a proton gradient across the membrane. The gamma chain is believed to be important in regulating ATPase activity and the flow of protons through the CF(0) complex. In Synechococcus sp. (strain RCC307), this protein is ATP synthase gamma chain.